Reading from the N-terminus, the 244-residue chain is Large ribosomal subunit protein bL25 (244 aa).

A disordered region spans residues 197-244; the sequence is ADVEAEAAEAALAKEAATEAAEEEETEKPASEAEASGEAEQADTDKKE. Positions 204–215 are enriched in low complexity; the sequence is AEAALAKEAATE.

Belongs to the bacterial ribosomal protein bL25 family. CTC subfamily. As to quaternary structure, part of the 50S ribosomal subunit; part of the 5S rRNA/L5/L18/L25 subcomplex. Contacts the 5S rRNA. Binds to the 5S rRNA independently of L5 and L18.

Functionally, this is one of the proteins that binds to the 5S RNA in the ribosome where it forms part of the central protuberance. The chain is Large ribosomal subunit protein bL25 from Coxiella burnetii (strain CbuK_Q154) (Coxiella burnetii (strain Q154)).